We begin with the raw amino-acid sequence, 1434 residues long: Nitric oxide synthase 1 (1434 aa).

The interval Met-1–Leu-205 is interaction with NOSIP. Residues Ser-17 to Gly-99 enclose the PDZ domain. Disordered regions lie at residues Thr-112–Thr-192 and Asn-276–Cys-302. Residues Tyr-163–Asp-245 are interaction with DYNLL1/PIN. Polar residues predominate over residues Pro-285–Pro-299. Position 339 (Ser-339) interacts with (6R)-L-erythro-5,6,7,8-tetrahydrobiopterin. A heme b-binding site is contributed by Cys-420. Positions 483, 592, 593, and 597 each coordinate L-arginine. Residues Val-682, Trp-683, and Phe-696 each contribute to the (6R)-L-erythro-5,6,7,8-tetrahydrobiopterin site. Tyr-711 is a binding site for heme b. Residues Lys-730–Met-750 are calmodulin-binding. The Flavodoxin-like domain occupies Ala-760–Phe-940. FMN is bound by residues Thr-766, Glu-767, Thr-768, Lys-770, Ser-771, Ser-812, Thr-813, and Gly-817. Residues Ser-852, Ser-862, and Ser-863 each carry the phosphoserine modification. Positions 891, 896, 898, 924, and 928 each coordinate FMN. The FAD-binding FR-type domain occupies Lys-995–Pro-1242. Position 1015 (Arg-1015) interacts with NADP(+). Residues His-1037, Arg-1178, Tyr-1179, Tyr-1180, Ser-1181, Thr-1196, and Ala-1198 each coordinate FAD. Ser-1201 lines the NADP(+) pocket. Positions 1202, 1215, 1216, and 1217 each coordinate FAD. Residues Thr-1256, Arg-1289, Ser-1318, Arg-1319, Lys-1325, Tyr-1327, Gln-1329, Asp-1362, Thr-1403, and Arg-1405 each coordinate NADP(+).

Belongs to the NOS family. As to quaternary structure, homodimer. Interacts with DLG4; the interaction possibly being prevented by the association between NOS1 and CAPON. Forms a ternary complex with CAPON and RASD1. Forms a ternary complex with CAPON and SYN1. Interacts with ZDHHC23. Interacts with NOSIP; which may impair its synaptic location. Interacts with HTR4. Interacts with SLC6A4. Interacts with VAC14. Interacts (via N-terminal domain) with DLG4 (via N-terminal tandem pair of PDZ domains). Interacts with SLC6A4. Forms a complex with ASL, ASS1 and SLC7A1; the complex regulates cell-autonomous L-arginine synthesis and citrulline recycling while channeling extracellular L-arginine to nitric oxide synthesis pathway. Interacts with DMD; localizes NOS1 to sarcolemma in muscle cells. Interacts with DYNLL1; inhibits the nitric oxide synthase activity. The cofactor is heme b. Requires FAD as cofactor. FMN serves as cofactor. (6R)-L-erythro-5,6,7,8-tetrahydrobiopterin is required as a cofactor. Post-translationally, ubiquitinated; mediated by STUB1/CHIP in the presence of Hsp70 and Hsp40 (in vitro). As to expression, isoform 1 is ubiquitously expressed: detected in skeletal muscle and brain, also in testis, lung and kidney, and at low levels in heart, adrenal gland and retina. Not detected in the platelets. Isoform 3 is expressed only in testis. Isoform 4 is detected in testis, skeletal muscle, lung, and kidney, at low levels in the brain, but not in the heart and adrenal gland.

Its subcellular location is the cell membrane. The protein localises to the sarcolemma. It is found in the cell projection. The protein resides in the dendritic spine. It catalyses the reaction 2 L-arginine + 3 NADPH + 4 O2 + H(+) = 2 L-citrulline + 2 nitric oxide + 3 NADP(+) + 4 H2O. Stimulated by calcium/calmodulin. Inhibited by DYNLL1 that prevents the dimerization of the protein. Inhibited by NOSIP. Its function is as follows. Produces nitric oxide (NO) which is a messenger molecule with diverse functions throughout the body. In the brain and peripheral nervous system, NO displays many properties of a neurotransmitter. Probably has nitrosylase activity and mediates cysteine S-nitrosylation of cytoplasmic target proteins such SRR. This chain is Nitric oxide synthase 1, found in Homo sapiens (Human).